The primary structure comprises 376 residues: Probable ureide permease A3 (376 aa).

The Extracellular portion of the chain corresponds to 1 to 9 (HLVESKGGA). The chain crosses the membrane as a helical span at residues 10-30 (IACMFLALFFLGTWPALLTML). At 31–41 (ERRGRLPQHTY) the chain is on the cytoplasmic side. A helical membrane pass occupies residues 42–62 (LDYSITNFFAALLIAFTFGEI). The Extracellular segment spans residues 63–80 (GKGKPDEPNFLAQLAQDN). Residues 81–101 (WPSVLFAMGGGVVLSLGNLSS) traverse the membrane as a helical segment. Over 102–103 (QY) the chain is Cytoplasmic. A helical membrane pass occupies residues 104–124 (AFAFVGLSVTEVITASITVVI). Topologically, residues 125–137 (GTTLNYFLDDKIN) are extracellular. The helical transmembrane segment at 138–158 (KAEILFPGVGCFLIAVFLGFC) threads the bilayer. Residues 159 to 231 (RFNSSNASDN…RAIKVFGKST (73 aa)) lie on the Cytoplasmic side of the membrane. An ATP-binding site is contributed by 223-230 (AIKVFGKS). The chain crosses the membrane as a helical span at residues 232 to 252 (LIGLALTFSAGLCFSMFSPAF). Residues 253-274 (NLATNDQWHTLPNGIPHLTVYT) lie on the Extracellular side of the membrane. The helical transmembrane segment at 275–295 (AFFYFSISCFVIAIILNITFL) threads the bilayer. Topologically, residues 296–317 (YHPVLNLPKSSLKAYLADSDGR) are cytoplasmic. A helical membrane pass occupies residues 318–338 (IWALLAGLLCGFGNSLQFMGG). At 339 to 376 (QAAGYQQQSLCRHFLCKHFWGVLLFGEYRRSSRKTYIC) the chain is on the extracellular side.

This sequence belongs to the plant ureide permease (TC 2.A.7.19) family.

The protein localises to the membrane. Functionally, transports a wide spectrum of oxo derivatives of heterocyclic nitrogen compounds. This chain is Probable ureide permease A3 (A3), found in Vigna unguiculata (Cowpea).